The chain runs to 180 residues: Ribulose bisphosphate carboxylase small subunit, chloroplastic 1 (180 aa).

The N-terminal 56 residues, 1–56, are a transit peptide targeting the chloroplast; it reads MASSVISSAAVATRTNVAQASMVAPFNGLKSAVSFPVSSKQNLDITSIASNGGRVQ.

This sequence belongs to the RuBisCO small chain family. Heterohexadecamer of 8 large and 8 small subunits.

It localises to the plastid. The protein resides in the chloroplast. RuBisCO catalyzes two reactions: the carboxylation of D-ribulose 1,5-bisphosphate, the primary event in carbon dioxide fixation, as well as the oxidative fragmentation of the pentose substrate. Both reactions occur simultaneously and in competition at the same active site. Although the small subunit is not catalytic it is essential for maximal activity. The polypeptide is Ribulose bisphosphate carboxylase small subunit, chloroplastic 1 (Petunia hybrida (Petunia)).